The primary structure comprises 99 residues: Large ribosomal subunit protein uL23 (99 aa).

The protein belongs to the universal ribosomal protein uL23 family. Part of the 50S ribosomal subunit. Contacts protein L29, and trigger factor when it is bound to the ribosome.

Functionally, one of the early assembly proteins it binds 23S rRNA. One of the proteins that surrounds the polypeptide exit tunnel on the outside of the ribosome. Forms the main docking site for trigger factor binding to the ribosome. The sequence is that of Large ribosomal subunit protein uL23 from Blochmanniella floridana.